The chain runs to 248 residues: Octanoyltransferase (248 aa).

The BPL/LPL catalytic domain occupies Ala53–Ser234. Substrate is bound by residues Arg93 to His100, Ala165 to Gly167, and Gly178 to Ser180. The Acyl-thioester intermediate role is filled by Cys196.

This sequence belongs to the LipB family.

It is found in the cytoplasm. It catalyses the reaction octanoyl-[ACP] + L-lysyl-[protein] = N(6)-octanoyl-L-lysyl-[protein] + holo-[ACP] + H(+). The protein operates within protein modification; protein lipoylation via endogenous pathway; protein N(6)-(lipoyl)lysine from octanoyl-[acyl-carrier-protein]: step 1/2. Functionally, catalyzes the transfer of endogenously produced octanoic acid from octanoyl-acyl-carrier-protein onto the lipoyl domains of lipoate-dependent enzymes. Lipoyl-ACP can also act as a substrate although octanoyl-ACP is likely to be the physiological substrate. This chain is Octanoyltransferase, found in Burkholderia multivorans (strain ATCC 17616 / 249).